We begin with the raw amino-acid sequence, 448 residues long: Asparagine--tRNA ligase (448 aa).

This sequence belongs to the class-II aminoacyl-tRNA synthetase family. In terms of assembly, homodimer.

It is found in the cytoplasm. It catalyses the reaction tRNA(Asn) + L-asparagine + ATP = L-asparaginyl-tRNA(Asn) + AMP + diphosphate + H(+). The polypeptide is Asparagine--tRNA ligase (Streptococcus pyogenes serotype M2 (strain MGAS10270)).